The primary structure comprises 106 residues: Large ribosomal subunit protein eL30 (106 aa).

It belongs to the eukaryotic ribosomal protein eL30 family.

In Sulfurisphaera tokodaii (strain DSM 16993 / JCM 10545 / NBRC 100140 / 7) (Sulfolobus tokodaii), this protein is Large ribosomal subunit protein eL30 (rpl30e).